The sequence spans 603 residues: Elongation factor 4 (603 aa).

The region spanning 7–189 is the tr-type G domain; the sequence is KKIRNFCIIA…SVVKNVPPPE (183 aa). GTP is bound by residues 19–24 and 136–139; these read DHGKST and NKID.

Belongs to the TRAFAC class translation factor GTPase superfamily. Classic translation factor GTPase family. LepA subfamily.

The protein localises to the cell membrane. The catalysed reaction is GTP + H2O = GDP + phosphate + H(+). Required for accurate and efficient protein synthesis under certain stress conditions. May act as a fidelity factor of the translation reaction, by catalyzing a one-codon backward translocation of tRNAs on improperly translocated ribosomes. Back-translocation proceeds from a post-translocation (POST) complex to a pre-translocation (PRE) complex, thus giving elongation factor G a second chance to translocate the tRNAs correctly. Binds to ribosomes in a GTP-dependent manner. The chain is Elongation factor 4 from Acetivibrio thermocellus (strain ATCC 27405 / DSM 1237 / JCM 9322 / NBRC 103400 / NCIMB 10682 / NRRL B-4536 / VPI 7372) (Clostridium thermocellum).